We begin with the raw amino-acid sequence, 237 residues long: Fibroblast growth factor 3 (237 aa).

The N-terminal stretch at 1-21 is a signal peptide; sequence MVIIWILLLSFISCGPQVSWA. N83 carries an N-linked (GlcNAc...) asparagine glycan.

Belongs to the heparin-binding growth factors family.

Functionally, plays an important role in the regulation of embryonic development, cell proliferation, and cell differentiation. This chain is Fibroblast growth factor 3 (fgf3), found in Xenopus laevis (African clawed frog).